The following is a 546-amino-acid chain: Hydroxylamine reductase (546 aa).

The [4Fe-4S] cluster site is built by Cys-3, Cys-6, Cys-18, and Cys-25. 8 residues coordinate hybrid [4Fe-2O-2S] cluster: His-245, Glu-269, Cys-313, Cys-401, Cys-429, Cys-454, Glu-488, and Lys-490. Cys-401 bears the Cysteine persulfide mark.

It belongs to the HCP family. [4Fe-4S] cluster is required as a cofactor. Hybrid [4Fe-2O-2S] cluster serves as cofactor.

The protein localises to the cytoplasm. It catalyses the reaction A + NH4(+) + H2O = hydroxylamine + AH2 + H(+). With respect to regulation, inhibited by cyanide and by sulfide and iron reagents such as dithioerythritol, 2,2'-dipyridyl and o-phenanthroline. Functionally, could be involved in assimilation and/or detoxification of hydroxylamine, which is a toxic compound that may be formed during nitrate/nitrite assimilation. Catalyzes the reduction of hydroxylamine to form NH(3) and H(2)O. It has a low reductase activity with FAD, FMN, benzyl viologen and bromphenol blue as electrons donors, but it is not able to use NAD or NADP. The protein is Hydroxylamine reductase of Rhodobacter capsulatus (Rhodopseudomonas capsulata).